Reading from the N-terminus, the 594-residue chain is Maternal effect protein oskar (594 aa).

The segment covering 44–62 (QQQPKQQQQQQQHQSQHQH) has biased composition (low complexity). The disordered stretch occupies residues 44–68 (QQQPKQQQQQQQHQSQHQHQQQKQK). The region spanning 174–243 (EYPDIDTEIR…SGKRIFNIKP (70 aa)) is the HTH OST-type domain.

As to quaternary structure, interacts with smaug (smg). Posterior pole of the oocyte.

Functionally, organizes the germ plasm and directs localization of the posterior determinant nanos. Oskar protein is required to keep oskar RNA and staufen protein at the posterior pole. This chain is Maternal effect protein oskar (osk), found in Drosophila virilis (Fruit fly).